Reading from the N-terminus, the 61-residue chain is Small ribosomal subunit protein uS14C (61 aa).

Zn(2+) contacts are provided by cysteine 24, cysteine 27, cysteine 40, and cysteine 43.

It belongs to the universal ribosomal protein uS14 family. Zinc-binding uS14 subfamily. As to quaternary structure, part of the 30S ribosomal subunit. Contacts proteins S3 and S10. Zn(2+) is required as a cofactor.

Functionally, binds 16S rRNA, required for the assembly of 30S particles and may also be responsible for determining the conformation of the 16S rRNA at the A site. This chain is Small ribosomal subunit protein uS14C, found in Bacillus licheniformis (strain ATCC 14580 / DSM 13 / JCM 2505 / CCUG 7422 / NBRC 12200 / NCIMB 9375 / NCTC 10341 / NRRL NRS-1264 / Gibson 46).